The primary structure comprises 855 residues: DNA mismatch repair protein MutS (855 aa).

613 to 620 (GPNMGGKS) contacts ATP.

It belongs to the DNA mismatch repair MutS family.

Its function is as follows. This protein is involved in the repair of mismatches in DNA. It is possible that it carries out the mismatch recognition step. This protein has a weak ATPase activity. The sequence is that of DNA mismatch repair protein MutS from Azotobacter vinelandii (strain DJ / ATCC BAA-1303).